A 188-amino-acid chain; its full sequence is MAADQKTLLDDLTRRMDGALESLRRDFAGLRSGRASPALIEPVRVEAYGGEVPLTQVGSIAVPEARMLTVQVWDRSLVGAVERAIRDSGLGLNPAADGQTVRVPIPQLTEERRGELARTAGKYSENAKIAVRGVRRDGMDQTKAQEKKGDISQDDVKVWSDAIQKLTDQYVKRIDEMLAEKEREIKQV.

The protein belongs to the RRF family.

The protein resides in the cytoplasm. Functionally, responsible for the release of ribosomes from messenger RNA at the termination of protein biosynthesis. May increase the efficiency of translation by recycling ribosomes from one round of translation to another. In Gluconacetobacter diazotrophicus (strain ATCC 49037 / DSM 5601 / CCUG 37298 / CIP 103539 / LMG 7603 / PAl5), this protein is Ribosome-recycling factor.